Reading from the N-terminus, the 208-residue chain is EF-hand protein 5 variant 2 (208 aa).

The tract at residues 1-35 is disordered; the sequence is MQARGTVKVQGDANVDGKMSTGQHPHHQHLNSTQA. 4 consecutive EF-hand domains span residues 64–98, 99–134, 135–170, and 171–206; these read MAEGFYVLSGGYKKLFIPSKDVYALMQNVGMHLTE, EEFHDALRVIGQSEPQNADELSFSDFLLLMTREVDD, TMADELRSAFFHYDKHKTGYVTRKQFTELFATLAER, and STPEELEELLAVAEVDETDDKIDYNRFVNELTSRVN. 5 residues coordinate Ca(2+): Glu-118, Asp-123, Asp-148, Thr-152, and Tyr-154.

This is EF-hand protein 5 variant 2 from Trypanosoma cruzi.